Consider the following 118-residue polypeptide: Large ribosomal subunit protein bL20 (118 aa).

This sequence belongs to the bacterial ribosomal protein bL20 family.

In terms of biological role, binds directly to 23S ribosomal RNA and is necessary for the in vitro assembly process of the 50S ribosomal subunit. It is not involved in the protein synthesizing functions of that subunit. The polypeptide is Large ribosomal subunit protein bL20 (Oceanobacillus iheyensis (strain DSM 14371 / CIP 107618 / JCM 11309 / KCTC 3954 / HTE831)).